The chain runs to 59 residues: MAEPDPDIFDEDDEAILAADAEADADFEAGRTVPHERVGEWLKTLGTPHQTPPPYSWRK.

Positions 38–59 (VGEWLKTLGTPHQTPPPYSWRK) are disordered. A compositionally biased stretch (pro residues) spans 50–59 (QTPPPYSWRK).

Functionally, antitoxin component of a type II toxin-antitoxin (TA) system. Neutralizes the effect of cognate toxin RelE4, but no other RelE or ParE toxin. The protein is Antitoxin RelB4 (relB4) of Caulobacter vibrioides (strain ATCC 19089 / CIP 103742 / CB 15) (Caulobacter crescentus).